The primary structure comprises 107 residues: DNA-directed RNA polymerase subunit omega (107 aa).

Positions 81–107 (MEEEAAKGNADAGQGEGDAPKTPGQDG) are disordered.

The protein belongs to the RNA polymerase subunit omega family. In terms of assembly, the RNAP catalytic core consists of 2 alpha, 1 beta, 1 beta' and 1 omega subunit. When a sigma factor is associated with the core the holoenzyme is formed, which can initiate transcription.

It carries out the reaction RNA(n) + a ribonucleoside 5'-triphosphate = RNA(n+1) + diphosphate. Its function is as follows. Promotes RNA polymerase assembly. Latches the N- and C-terminal regions of the beta' subunit thereby facilitating its interaction with the beta and alpha subunits. In Alkalilimnicola ehrlichii (strain ATCC BAA-1101 / DSM 17681 / MLHE-1), this protein is DNA-directed RNA polymerase subunit omega.